Here is a 72-residue protein sequence, read N- to C-terminus: ATP synthase subunit c (72 aa).

2 helical membrane-spanning segments follow: residues 1 to 21 and 48 to 68; these read MSLG…GAGI and MFIG…FSFI.

Belongs to the ATPase C chain family. In terms of assembly, F-type ATPases have 2 components, F(1) - the catalytic core - and F(0) - the membrane proton channel. F(1) has five subunits: alpha(3), beta(3), gamma(1), delta(1), epsilon(1). F(0) has three main subunits: a(1), b(2) and c(10-14). The alpha and beta chains form an alternating ring which encloses part of the gamma chain. F(1) is attached to F(0) by a central stalk formed by the gamma and epsilon chains, while a peripheral stalk is formed by the delta and b chains.

It is found in the cell membrane. F(1)F(0) ATP synthase produces ATP from ADP in the presence of a proton or sodium gradient. F-type ATPases consist of two structural domains, F(1) containing the extramembraneous catalytic core and F(0) containing the membrane proton channel, linked together by a central stalk and a peripheral stalk. During catalysis, ATP synthesis in the catalytic domain of F(1) is coupled via a rotary mechanism of the central stalk subunits to proton translocation. In terms of biological role, key component of the F(0) channel; it plays a direct role in translocation across the membrane. A homomeric c-ring of between 10-14 subunits forms the central stalk rotor element with the F(1) delta and epsilon subunits. The protein is ATP synthase subunit c of Geobacillus stearothermophilus (Bacillus stearothermophilus).